The chain runs to 445 residues: KICSTOR subunit 2 (445 aa).

It belongs to the KICS2 family. Part of the KICSTOR complex composed of KPTN, ITFG2, KICS2 and SZT2. SZT2 probably serves as a link between the other three proteins in the KICSTOR complex and may mediate the direct interaction with the GATOR complex via GATOR1. The KICSTOR complex interacts directly with the GATOR1 complex and most probably indirectly with the GATOR2 complex in an amino acid-independent manner.

It is found in the lysosome membrane. In terms of biological role, as part of the KICSTOR complex functions in the amino acid-sensing branch of the TORC1 signaling pathway. Recruits, in an amino acid-independent manner, the GATOR1 complex to the lysosomal membranes and allows its interaction with GATOR2 and the RAG GTPases. Functions upstream of the RAG GTPases and is required to negatively regulate mTORC1 signaling in absence of amino acids. In absence of the KICSTOR complex mTORC1 is constitutively localized to the lysosome and activated. The KICSTOR complex is also probably involved in the regulation of mTORC1 by glucose. This Mus musculus (Mouse) protein is KICSTOR subunit 2.